The following is a 380-amino-acid chain: Glucose-1-phosphate adenylyltransferase (380 aa).

Alpha-D-glucose 1-phosphate is bound by residues G164, 179–180 (EK), and S190.

It belongs to the bacterial/plant glucose-1-phosphate adenylyltransferase family. Homotetramer.

The catalysed reaction is alpha-D-glucose 1-phosphate + ATP + H(+) = ADP-alpha-D-glucose + diphosphate. It functions in the pathway glycan biosynthesis; glycogen biosynthesis. Involved in the biosynthesis of ADP-glucose, a building block required for the elongation reactions to produce glycogen. Catalyzes the reaction between ATP and alpha-D-glucose 1-phosphate (G1P) to produce pyrophosphate and ADP-Glc. This is Glucose-1-phosphate adenylyltransferase from Lactococcus lactis subsp. cremoris (strain SK11).